The sequence spans 310 residues: Methionyl-tRNA formyltransferase (310 aa).

109–112 contacts (6S)-5,6,7,8-tetrahydrofolate; sequence SLLP.

The protein belongs to the Fmt family.

The catalysed reaction is L-methionyl-tRNA(fMet) + (6R)-10-formyltetrahydrofolate = N-formyl-L-methionyl-tRNA(fMet) + (6S)-5,6,7,8-tetrahydrofolate + H(+). Functionally, attaches a formyl group to the free amino group of methionyl-tRNA(fMet). The formyl group appears to play a dual role in the initiator identity of N-formylmethionyl-tRNA by promoting its recognition by IF2 and preventing the misappropriation of this tRNA by the elongation apparatus. The chain is Methionyl-tRNA formyltransferase from Pseudomonas putida (strain GB-1).